A 994-amino-acid polypeptide reads, in one-letter code: Protein translocase subunit SecA (994 aa).

ATP contacts are provided by residues glutamine 85, 103–107 (GEGKT), and aspartate 492. Residues 868 to 888 (IPDGAGPVADAQPVRPAAARQ) show a composition bias toward low complexity. A disordered region spans residues 868-994 (IPDGAGPVAD…HGDPARRNTE (127 aa)). Pro residues predominate over residues 889–900 (TPPPPSPVPSAP). Zn(2+)-binding residues include cysteine 973, cysteine 975, cysteine 984, and histidine 985. Positions 984 to 994 (CHGDPARRNTE) are enriched in basic and acidic residues.

This sequence belongs to the SecA family. In terms of assembly, monomer and homodimer. Part of the essential Sec protein translocation apparatus which comprises SecA, SecYEG and auxiliary proteins SecDF. Other proteins may also be involved. Zn(2+) is required as a cofactor.

The protein localises to the cell membrane. The protein resides in the cytoplasm. It carries out the reaction ATP + H2O + cellular proteinSide 1 = ADP + phosphate + cellular proteinSide 2.. Part of the Sec protein translocase complex. Interacts with the SecYEG preprotein conducting channel. Has a central role in coupling the hydrolysis of ATP to the transfer of proteins into and across the cell membrane, serving as an ATP-driven molecular motor driving the stepwise translocation of polypeptide chains across the membrane. This is Protein translocase subunit SecA from Frankia casuarinae (strain DSM 45818 / CECT 9043 / HFP020203 / CcI3).